The chain runs to 275 residues: Formamidopyrimidine-DNA glycosylase (275 aa).

Residue Pro2 is the Schiff-base intermediate with DNA of the active site. Glu3 serves as the catalytic Proton donor. Residue Lys58 is the Proton donor; for beta-elimination activity of the active site. DNA is bound by residues His92, Arg111, and Arg154. The FPG-type zinc finger occupies 239–273; it reads HVYHRQGLPCQRCGTPIERIKVAQRGTHFCPHCQV. The Proton donor; for delta-elimination activity role is filled by Arg263.

The protein belongs to the FPG family. In terms of assembly, monomer. Requires Zn(2+) as cofactor.

The catalysed reaction is Hydrolysis of DNA containing ring-opened 7-methylguanine residues, releasing 2,6-diamino-4-hydroxy-5-(N-methyl)formamidopyrimidine.. The enzyme catalyses 2'-deoxyribonucleotide-(2'-deoxyribose 5'-phosphate)-2'-deoxyribonucleotide-DNA = a 3'-end 2'-deoxyribonucleotide-(2,3-dehydro-2,3-deoxyribose 5'-phosphate)-DNA + a 5'-end 5'-phospho-2'-deoxyribonucleoside-DNA + H(+). In terms of biological role, involved in base excision repair of DNA damaged by oxidation or by mutagenic agents. Acts as a DNA glycosylase that recognizes and removes damaged bases. Has a preference for oxidized purines, such as 7,8-dihydro-8-oxoguanine (8-oxoG). Has AP (apurinic/apyrimidinic) lyase activity and introduces nicks in the DNA strand. Cleaves the DNA backbone by beta-delta elimination to generate a single-strand break at the site of the removed base with both 3'- and 5'-phosphates. The sequence is that of Formamidopyrimidine-DNA glycosylase from Pediococcus pentosaceus (strain ATCC 25745 / CCUG 21536 / LMG 10740 / 183-1w).